The sequence spans 487 residues: 1-aminocyclopropane-1-carboxylate synthase 1 (487 aa).

Lys-286 is modified (N6-(pyridoxal phosphate)lysine).

It belongs to the class-I pyridoxal-phosphate-dependent aminotransferase family. In terms of assembly, homodimer. It depends on pyridoxal 5'-phosphate as a cofactor.

It carries out the reaction S-adenosyl-L-methionine = 1-aminocyclopropane-1-carboxylate + S-methyl-5'-thioadenosine + H(+). Its pathway is alkene biosynthesis; ethylene biosynthesis via S-adenosyl-L-methionine; ethylene from S-adenosyl-L-methionine: step 1/2. Functionally, catalyzes the formation of 1-aminocyclopropane-1-carboxylate, a direct precursor of ethylene in higher plants. The polypeptide is 1-aminocyclopropane-1-carboxylate synthase 1 (ACC1) (Oryza sativa subsp. indica (Rice)).